The sequence spans 672 residues: Transmembrane 9 superfamily member 2 (672 aa).

Positions 1-18 (MKRGVWLLIYCYATLTKG) are cleaved as a signal peptide. Residues 19-307 (FSLPGLSPTT…DKYLHIYDPQ (289 aa)) lie on the Extracellular side of the membrane. A helical transmembrane segment spans residues 308-328 (IQWFSLINFSVIVILLSSVVM). Residues 329–383 (HSLLRALKSDLARYNELNLDNEFHEDSGWKLGHGDVFRTPSKSMLLSILVGSGMQ) lie on the Cytoplasmic side of the membrane. Residues 384–404 (LFLMVMCSIFFAAVGLVSPVS) traverse the membrane as a helical segment. Residues 405 to 410 (RGSLPT) lie on the Extracellular side of the membrane. The chain crosses the membrane as a helical span at residues 411–431 (VMFVLYALFGFVGSYASMGVY). The Cytoplasmic segment spans residues 432–447 (KFFRGPYWKANMILTP). A helical transmembrane segment spans residues 448–468 (ILLPGAIFLLIVIMNFFLLFA). Residues 469–479 (HSSGVIPARSL) lie on the Extracellular side of the membrane. A helical membrane pass occupies residues 480–500 (FFIILLWFLVSVPLSFAGSIV). The Cytoplasmic portion of the chain corresponds to 501–532 (AHKQCNWDEHPTKTNQIARQIPYQPWYLRTAQ). A helical transmembrane segment spans residues 533-553 (ATLIAGIFSFGSIAVELYFIY). The Extracellular segment spans residues 554–565 (SSLWFNKIFYMF). Residues 566-586 (GFLLFSFLLLTLTTSLVTILI) traverse the membrane as a helical segment. At 587–601 (TYYSLCLENWLWQWR) the chain is on the cytoplasmic side. The chain crosses the membrane as a helical span at residues 602-622 (SFIIGGLGCSIYTFIHSILFT). Residues 623-628 (KFKLGG) are Extracellular-facing. The helical transmembrane segment at 629–649 (VITVVLYLGYSLIISALCCVV) threads the bilayer. Topologically, residues 650–672 (TGAIGFFSSMFFIRKIYSAIKVE) are cytoplasmic.

This sequence belongs to the nonaspanin (TM9SF) (TC 9.A.2) family.

The protein localises to the vacuole membrane. In terms of biological role, with EMP70 and TMN3, plays a critical role in the late stages of a nutrient-controlled pathway notably regulating FLO11 gene expression. Acts downstream of RAS2 and TOR. Essential for cell adhesion and filamentous growth. May play a role as effector of cellular copper homeostasis. The chain is Transmembrane 9 superfamily member 2 (TMN2) from Saccharomyces cerevisiae (strain ATCC 204508 / S288c) (Baker's yeast).